A 310-amino-acid polypeptide reads, in one-letter code: Ribosomal RNA small subunit methyltransferase H (310 aa).

S-adenosyl-L-methionine is bound by residues 47-49, Asp66, Phe93, Asp108, and Gln115; that span reads GGH.

Belongs to the methyltransferase superfamily. RsmH family.

It localises to the cytoplasm. The catalysed reaction is cytidine(1402) in 16S rRNA + S-adenosyl-L-methionine = N(4)-methylcytidine(1402) in 16S rRNA + S-adenosyl-L-homocysteine + H(+). Specifically methylates the N4 position of cytidine in position 1402 (C1402) of 16S rRNA. This is Ribosomal RNA small subunit methyltransferase H from Prochlorococcus marinus (strain MIT 9303).